Reading from the N-terminus, the 168-residue chain is NADH-quinone oxidoreductase subunit I (168 aa).

2 4Fe-4S ferredoxin-type domains span residues Leu58–Gly88 and Val99–Asn128. Residues Cys68, Cys71, Cys74, Cys78, Cys108, Cys111, Cys114, and Cys118 each coordinate [4Fe-4S] cluster.

This sequence belongs to the complex I 23 kDa subunit family. As to quaternary structure, NDH-1 is composed of 14 different subunits. Subunits NuoA, H, J, K, L, M, N constitute the membrane sector of the complex. The cofactor is [4Fe-4S] cluster.

The protein localises to the cell inner membrane. It catalyses the reaction a quinone + NADH + 5 H(+)(in) = a quinol + NAD(+) + 4 H(+)(out). NDH-1 shuttles electrons from NADH, via FMN and iron-sulfur (Fe-S) centers, to quinones in the respiratory chain. The immediate electron acceptor for the enzyme in this species is believed to be ubiquinone. Couples the redox reaction to proton translocation (for every two electrons transferred, four hydrogen ions are translocated across the cytoplasmic membrane), and thus conserves the redox energy in a proton gradient. The sequence is that of NADH-quinone oxidoreductase subunit I from Bradyrhizobium diazoefficiens (strain JCM 10833 / BCRC 13528 / IAM 13628 / NBRC 14792 / USDA 110).